The sequence spans 362 residues: MPPAKRKGECPGAAPKKPKDPVRVPKLLIRGGVEVLEVKTGVDSITEVECFLTPEMGDANEHLRGYSQRVTCDVTFENDAPQKKTLPCYSTARIPLPNLNEDLTCGNILMWEAVTVKTEVLGVTSMLNLHAEAQKVHDNGAGRPVQGSNFHFFSVGGEPLELQGVLHNYRTTYPEGTIAPKNPTAESQVMNTEHKAYLDKTGAYPVECWVPDPSRNENTRYFGTYTGGENVPPVLHVTNTATTVLLDEQGVGPLCKADSLYVSAVDICGLFTNSSGTQQWRGLSRYFKISLRKRSVKNPYPISFLLSDLINRRTTRVQGQPMYGMNAQVEEVRVYDGTEELPGDPDMMRYIDKYGQHQTKML.

Residues lysine 5–lysine 19 carry the Bipartite nuclear localization signal motif. Residue threonine 338 is modified to Phosphothreonine; by host.

It belongs to the polyomaviruses coat protein VP1 family. In terms of assembly, homomultimer; disulfide-linked. The virus capsid is composed of 72 icosahedral units, each one composed of five disulfide-linked copies of VP1. Interacts with minor capsid proteins VP2 and VP3.

The protein localises to the virion. Its subcellular location is the host nucleus. In terms of biological role, forms an icosahedral capsid with a T=7 symmetry and a 40 nm diameter. The capsid is composed of 72 pentamers linked to each other by disulfide bonds and associated with VP2 or VP3 proteins. Interacts with sialic acids on the cell surface to provide virion attachment to target cell. Once attached, the virion is internalized by endocytosis and traffics to the endoplasmic reticulum. Inside the endoplasmic reticulum, the protein folding machinery isomerizes VP1 interpentamer disulfide bonds, thereby triggering initial uncoating. Next, the virion uses the endoplasmic reticulum-associated degradation machinery to probably translocate in the cytosol before reaching the nucleus. Nuclear entry of the viral DNA involves the selective exposure and importin recognition of VP2/Vp3 nuclear localization signal. In late phase of infection, neo-synthesized VP1 encapsulates replicated genomic DNA in the nucleus, and participates in rearranging nucleosomes around the viral DNA. In Simian virus 12 (strain wt100) (SV-12), this protein is Major capsid protein VP1.